A 488-amino-acid polypeptide reads, in one-letter code: MWTFQADRLSGIVSALAALCVACCAQSPSTGNISVVKEIVDKLLKGYDVRLRPDFGGNPVTVGMSIHISSIDQISEVNMDYTITMYFQQSWRDKRLAYNDLPLNLTLDNRVADQLWLPDTYFLNDKKSFLHGVTVKNRMIRLHPDGTVLYGLRITTTAACMMDLRRYPLDQQNCTLEIESYGYTVDDIVFFWQGNDSAVTGMEVLELPQFTIIEQRLVSREVVFTTGSYLRLSLSFRIKRNIGYFILQTYMPSILITILSWVSFWINYDASAARVALGVTTVLTMTTINTHLRETLPKIPYVKAIDVYLMGCFVFVFLALLEYAFVNYIFFGRGPRQQKKQSERISKANNERHRYEEKRVREQVDPYGNILLSTLDMNNELLATDMMSSVGDSRNSVMSFEGSGIQFRKPLASRDGFGHHPTLDRHVPLTHHAAARNRANCRLRRRSSKLKLKIPDLTDVSTIDKWSRIIFPITFGFFNLVYWLYYVN.

The N-terminal stretch at 1–25 is a signal peptide; the sequence is MWTFQADRLSGIVSALAALCVACCA. Topologically, residues 26–244 are extracellular; it reads QSPSTGNISV…SFRIKRNIGY (219 aa). N-linked (GlcNAc...) asparagine glycosylation is found at N32, N104, N173, and N195. Residues C160 and C174 are joined by a disulfide bond. 3 consecutive transmembrane segments (helical) span residues 245–266, 271–292, and 304–326; these read FILQ…SFWI, SAAR…NTHL, and AIDV…YAFV. At 327-465 the chain is on the cytoplasmic side; sequence NYIFFGRGPR…DLTDVSTIDK (139 aa). Residues 466–487 form a helical membrane-spanning segment; the sequence is WSRIIFPITFGFFNLVYWLYYV.

This sequence belongs to the ligand-gated ion channel (TC 1.A.9) family. Gamma-aminobutyric acid receptor (TC 1.A.9.5) subfamily. GABRB4 sub-subfamily. As to quaternary structure, generally pentameric. There are five types of GABA(A) receptor chains: alpha, beta, gamma, delta, and rho.

The protein localises to the postsynaptic cell membrane. The protein resides in the cell membrane. GABA, the major inhibitory neurotransmitter in the vertebrate brain, mediates neuronal inhibition by binding to the GABA/benzodiazepine receptor and opening an integral chloride channel. The polypeptide is Gamma-aminobutyric acid receptor subunit beta-4 (GABRB4) (Gallus gallus (Chicken)).